A 241-amino-acid polypeptide reads, in one-letter code: Probable transcriptional regulatory protein Rmet_0785 (241 aa).

The protein belongs to the TACO1 family.

It is found in the cytoplasm. This is Probable transcriptional regulatory protein Rmet_0785 from Cupriavidus metallidurans (strain ATCC 43123 / DSM 2839 / NBRC 102507 / CH34) (Ralstonia metallidurans).